The following is a 190-amino-acid chain: Threonylcarbamoyl-AMP synthase (190 aa).

Residues 7 to 190 (GDAIAAAIDV…ALTGELFRQG (184 aa)) form the YrdC-like domain.

This sequence belongs to the SUA5 family. TsaC subfamily.

The protein localises to the cytoplasm. The catalysed reaction is L-threonine + hydrogencarbonate + ATP = L-threonylcarbamoyladenylate + diphosphate + H2O. Required for the formation of a threonylcarbamoyl group on adenosine at position 37 (t(6)A37) in tRNAs that read codons beginning with adenine. Catalyzes the conversion of L-threonine, HCO(3)(-)/CO(2) and ATP to give threonylcarbamoyl-AMP (TC-AMP) as the acyladenylate intermediate, with the release of diphosphate. The protein is Threonylcarbamoyl-AMP synthase of Escherichia coli O1:K1 / APEC.